Reading from the N-terminus, the 147-residue chain is D-aminoacyl-tRNA deacylase (147 aa).

Residues 138-139 (GP) carry the Gly-cisPro motif, important for rejection of L-amino acids motif.

The protein belongs to the DTD family. As to quaternary structure, homodimer.

It is found in the cytoplasm. It carries out the reaction glycyl-tRNA(Ala) + H2O = tRNA(Ala) + glycine + H(+). It catalyses the reaction a D-aminoacyl-tRNA + H2O = a tRNA + a D-alpha-amino acid + H(+). An aminoacyl-tRNA editing enzyme that deacylates mischarged D-aminoacyl-tRNAs. Also deacylates mischarged glycyl-tRNA(Ala), protecting cells against glycine mischarging by AlaRS. Acts via tRNA-based rather than protein-based catalysis; rejects L-amino acids rather than detecting D-amino acids in the active site. By recycling D-aminoacyl-tRNA to D-amino acids and free tRNA molecules, this enzyme counteracts the toxicity associated with the formation of D-aminoacyl-tRNA entities in vivo and helps enforce protein L-homochirality. The protein is D-aminoacyl-tRNA deacylase of Prosthecochloris aestuarii (strain DSM 271 / SK 413).